Reading from the N-terminus, the 471-residue chain is 3-isopropylmalate dehydratase large subunit (471 aa).

Residues Cys-347, Cys-407, and Cys-410 each coordinate [4Fe-4S] cluster.

It belongs to the aconitase/IPM isomerase family. LeuC type 1 subfamily. Heterodimer of LeuC and LeuD. [4Fe-4S] cluster is required as a cofactor.

It catalyses the reaction (2R,3S)-3-isopropylmalate = (2S)-2-isopropylmalate. The protein operates within amino-acid biosynthesis; L-leucine biosynthesis; L-leucine from 3-methyl-2-oxobutanoate: step 2/4. Functionally, catalyzes the isomerization between 2-isopropylmalate and 3-isopropylmalate, via the formation of 2-isopropylmaleate. This Geobacillus kaustophilus (strain HTA426) protein is 3-isopropylmalate dehydratase large subunit.